The following is a 478-amino-acid chain: Histidine--tRNA ligase (478 aa).

This sequence belongs to the class-II aminoacyl-tRNA synthetase family. Homodimer.

Its subcellular location is the cytoplasm. It catalyses the reaction tRNA(His) + L-histidine + ATP = L-histidyl-tRNA(His) + AMP + diphosphate + H(+). In Xanthomonas axonopodis pv. citri (strain 306), this protein is Histidine--tRNA ligase (hisS).